Here is a 361-residue protein sequence, read N- to C-terminus: Phosphoserine aminotransferase (361 aa).

L-glutamate is bound at residue arginine 43. Pyridoxal 5'-phosphate is bound by residues 77–78, tryptophan 103, threonine 153, aspartate 173, and glutamine 196; that span reads AS. Lysine 197 carries the post-translational modification N6-(pyridoxal phosphate)lysine. 238–239 provides a ligand contact to pyridoxal 5'-phosphate; sequence NT.

It belongs to the class-V pyridoxal-phosphate-dependent aminotransferase family. SerC subfamily. Homodimer. Pyridoxal 5'-phosphate is required as a cofactor.

It is found in the cytoplasm. It catalyses the reaction O-phospho-L-serine + 2-oxoglutarate = 3-phosphooxypyruvate + L-glutamate. The catalysed reaction is 4-(phosphooxy)-L-threonine + 2-oxoglutarate = (R)-3-hydroxy-2-oxo-4-phosphooxybutanoate + L-glutamate. It functions in the pathway amino-acid biosynthesis; L-serine biosynthesis; L-serine from 3-phospho-D-glycerate: step 2/3. Its pathway is cofactor biosynthesis; pyridoxine 5'-phosphate biosynthesis; pyridoxine 5'-phosphate from D-erythrose 4-phosphate: step 3/5. Its function is as follows. Catalyzes the reversible conversion of 3-phosphohydroxypyruvate to phosphoserine and of 3-hydroxy-2-oxo-4-phosphonooxybutanoate to phosphohydroxythreonine. The protein is Phosphoserine aminotransferase of Pseudomonas aeruginosa (strain ATCC 15692 / DSM 22644 / CIP 104116 / JCM 14847 / LMG 12228 / 1C / PRS 101 / PAO1).